The primary structure comprises 362 residues: Peptide chain release factor 1 (362 aa).

At Gln235 the chain carries N5-methylglutamine.

Belongs to the prokaryotic/mitochondrial release factor family. Methylated by PrmC. Methylation increases the termination efficiency of RF1.

It localises to the cytoplasm. Peptide chain release factor 1 directs the termination of translation in response to the peptide chain termination codons UAG and UAA. The chain is Peptide chain release factor 1 from Variovorax paradoxus (strain S110).